Here is a 147-residue protein sequence, read N- to C-terminus: Myoglobin (147 aa).

In terms of domain architecture, Globin spans 2–141 (ADHDLVLKCW…VIGDIDGYYK (140 aa)). Residue His60 coordinates nitrite. Residue His60 coordinates O2. His89 lines the heme b pocket.

The protein belongs to the globin family. In terms of assembly, monomeric.

It localises to the cytoplasm. The protein resides in the sarcoplasm. The catalysed reaction is Fe(III)-heme b-[protein] + nitric oxide + H2O = Fe(II)-heme b-[protein] + nitrite + 2 H(+). The enzyme catalyses H2O2 + AH2 = A + 2 H2O. In terms of biological role, monomeric heme protein which primary function is to store oxygen and facilitate its diffusion within muscle tissues. Reversibly binds oxygen through a pentacoordinated heme iron and enables its timely and efficient release as needed during periods of heightened demand. Depending on the oxidative conditions of tissues and cells, and in addition to its ability to bind oxygen, it also has a nitrite reductase activity whereby it regulates the production of bioactive nitric oxide. Under stress conditions, like hypoxia and anoxia, it also protects cells against reactive oxygen species thanks to its pseudoperoxidase activity. The sequence is that of Myoglobin (mb) from Danio rerio (Zebrafish).